Here is a 272-residue protein sequence, read N- to C-terminus: Potassium channel regulatory protein (272 aa).

The BTB domain maps to 5–106 (ELVTLNVGGK…LLNPYLLQPR (102 aa)).

As to quaternary structure, can form homooligomers. Interacts with KCNA1 (via cytoplasmic N-terminal domain) and KCNA4. As to expression, ubiquitous in normal tissues and expressed in some tumor tissues.

It is found in the endoplasmic reticulum. In terms of biological role, inhibits potassium fluxes in cells. May regulate Kv1 family channel proteins by retaining a fraction of channels in endomembranes. This Homo sapiens (Human) protein is Potassium channel regulatory protein (KCNRG).